The primary structure comprises 90 residues: Small ribosomal subunit protein uS15c (90 aa).

Component of the chloroplast small ribosomal subunit (SSU). Mature 70S chloroplast ribosomes of higher plants consist of a small (30S) and a large (50S) subunit. The 30S small subunit contains 1 molecule of ribosomal RNA (16S rRNA) and 24 different proteins. The 50S large subunit contains 3 rRNA molecules (23S, 5S and 4.5S rRNA) and 33 different proteins.

It is found in the plastid. It localises to the chloroplast. Functionally, component of the chloroplast ribosome (chloro-ribosome), a dedicated translation machinery responsible for the synthesis of chloroplast genome-encoded proteins, including proteins of the transcription and translation machinery and components of the photosynthetic apparatus. This is Small ribosomal subunit protein uS15c (rps15) from Spinacia oleracea (Spinach).